The sequence spans 86 residues: Putative defensin-like protein 211 (86 aa).

A signal peptide spans 1–19 (MNTIVLFLTLLILVSSCTS). Intrachain disulfides connect cysteine 55–cysteine 72, cysteine 58–cysteine 77, and cysteine 62–cysteine 79.

The protein belongs to the DEFL family.

The protein localises to the secreted. This Arabidopsis thaliana (Mouse-ear cress) protein is Putative defensin-like protein 211.